Reading from the N-terminus, the 96-residue chain is Small ribosomal subunit protein bS6 (96 aa).

It belongs to the bacterial ribosomal protein bS6 family.

Functionally, binds together with bS18 to 16S ribosomal RNA. The sequence is that of Small ribosomal subunit protein bS6 from Mycolicibacterium paratuberculosis (strain ATCC BAA-968 / K-10) (Mycobacterium paratuberculosis).